The following is a 291-amino-acid chain: Nucleotide-binding protein lmo2474 (291 aa).

Position 13-20 (13-20 (GMSGAGKT)) interacts with ATP. Residue 63–66 (DLRG) coordinates GTP.

Belongs to the RapZ-like family.

Functionally, displays ATPase and GTPase activities. The polypeptide is Nucleotide-binding protein lmo2474 (Listeria monocytogenes serovar 1/2a (strain ATCC BAA-679 / EGD-e)).